The primary structure comprises 240 residues: Ribonuclease 3 (240 aa).

The 127-residue stretch at 10–136 (VREFQETVGV…LIGAVYLDRG (127 aa)) folds into the RNase III domain. Mg(2+) is bound at residue Glu49. Residue Asp53 is part of the active site. Mg(2+)-binding residues include Asp122 and Glu125. The active site involves Glu125. The DRBM domain maps to 163–231 (DWKTSLQELT…AESAWKAIRA (69 aa)). A disordered region spans residues 205-240 (TYGSGEGRSKKEAEQQAAESAWKAIRAATEKAKQES). Residues 219–228 (QQAAESAWKA) show a composition bias toward low complexity.

It belongs to the ribonuclease III family. In terms of assembly, homodimer. The cofactor is Mg(2+).

Its subcellular location is the cytoplasm. It catalyses the reaction Endonucleolytic cleavage to 5'-phosphomonoester.. Its function is as follows. Digests double-stranded RNA. Involved in the processing of primary rRNA transcript to yield the immediate precursors to the large and small rRNAs (23S and 16S). Processes some mRNAs, and tRNAs when they are encoded in the rRNA operon. Processes pre-crRNA and tracrRNA of type II CRISPR loci if present in the organism. The polypeptide is Ribonuclease 3 (Thermobifida fusca (strain YX)).